The sequence spans 156 residues: Crossover junction endodeoxyribonuclease RuvC (156 aa).

Catalysis depends on residues Asp-7, Glu-67, and Asp-140. Residues Asp-7, Glu-67, and Asp-140 each contribute to the Mg(2+) site.

Belongs to the RuvC family. As to quaternary structure, homodimer which binds Holliday junction (HJ) DNA. The HJ becomes 2-fold symmetrical on binding to RuvC with unstacked arms; it has a different conformation from HJ DNA in complex with RuvA. In the full resolvosome a probable DNA-RuvA(4)-RuvB(12)-RuvC(2) complex forms which resolves the HJ. Mg(2+) is required as a cofactor.

It is found in the cytoplasm. It catalyses the reaction Endonucleolytic cleavage at a junction such as a reciprocal single-stranded crossover between two homologous DNA duplexes (Holliday junction).. The RuvA-RuvB-RuvC complex processes Holliday junction (HJ) DNA during genetic recombination and DNA repair. Endonuclease that resolves HJ intermediates. Cleaves cruciform DNA by making single-stranded nicks across the HJ at symmetrical positions within the homologous arms, yielding a 5'-phosphate and a 3'-hydroxyl group; requires a central core of homology in the junction. The consensus cleavage sequence is 5'-(A/T)TT(C/G)-3'. Cleavage occurs on the 3'-side of the TT dinucleotide at the point of strand exchange. HJ branch migration catalyzed by RuvA-RuvB allows RuvC to scan DNA until it finds its consensus sequence, where it cleaves and resolves the cruciform DNA. The chain is Crossover junction endodeoxyribonuclease RuvC from Rickettsia felis (strain ATCC VR-1525 / URRWXCal2) (Rickettsia azadi).